Consider the following 239-residue polypeptide: Phosphoribosylaminoimidazole-succinocarboxamide synthase (239 aa).

This sequence belongs to the SAICAR synthetase family.

The catalysed reaction is 5-amino-1-(5-phospho-D-ribosyl)imidazole-4-carboxylate + L-aspartate + ATP = (2S)-2-[5-amino-1-(5-phospho-beta-D-ribosyl)imidazole-4-carboxamido]succinate + ADP + phosphate + 2 H(+). It functions in the pathway purine metabolism; IMP biosynthesis via de novo pathway; 5-amino-1-(5-phospho-D-ribosyl)imidazole-4-carboxamide from 5-amino-1-(5-phospho-D-ribosyl)imidazole-4-carboxylate: step 1/2. In Brevibacillus brevis (strain 47 / JCM 6285 / NBRC 100599), this protein is Phosphoribosylaminoimidazole-succinocarboxamide synthase.